A 292-amino-acid polypeptide reads, in one-letter code: G1/S-specific cyclin-D3 (292 aa).

Residues 27-152 (VLQSLLRLEE…LVLGKLKWDL (126 aa)) form the Cyclin N-terminal domain. The segment at 256–292 (REAAQTAPSPVPKAPRGSSSQGPSQTSTPTDVTAIHL) is disordered. Phosphoserine occurs at positions 264 and 279. Positions 272-285 (GSSSQGPSQTSTPT) are enriched in low complexity. Thr-283 carries the phosphothreonine modification.

It belongs to the cyclin family. Cyclin D subfamily. As to quaternary structure, interacts with the CDK4 and CDK6 protein kinases to form a serine/threonine kinase holoenzyme complex. The cyclin subunit imparts substrate specificity to the complex. Interacts with ATF5. Interacts with EIF3K. Component of the ternary complex cyclin D/CDK4/CDKN1B required for nuclear translocation and modulation of CDK4-mediated kinase activity. Can form similar complexes with either CDKN1A or CDKN2A. Post-translationally, phosphorylation at Thr-283 by MAP kinases is required for ubiquitination and degradation by the DCX(AMBRA1) complex. Ubiquitinated by the DCX(AMBRA1) complex during the transition from G1 to S cell phase, leading to its degradation: ubiquitination is dependent on Thr-283 phosphorylation. The DCX(AMBRA1) complex represents the major regulator of CCND3 stability during the G1/S transition. Polyubiquitinated by the SCF(FBXL2) complex, leading to proteasomal degradation.

It is found in the nucleus. The protein resides in the cytoplasm. In terms of biological role, regulatory component of the cyclin D3-CDK4 (DC) complex that phosphorylates and inhibits members of the retinoblastoma (RB) protein family including RB1 and regulates the cell-cycle during G(1)/S transition. Phosphorylation of RB1 allows dissociation of the transcription factor E2F from the RB/E2F complex and the subsequent transcription of E2F target genes which are responsible for the progression through the G(1) phase. Hypophosphorylates RB1 in early G(1) phase. Cyclin D-CDK4 complexes are major integrators of various mitogenenic and antimitogenic signals. Component of the ternary complex, cyclin D3/CDK4/CDKN1B, required for nuclear translocation and activity of the cyclin D-CDK4 complex. Shows transcriptional coactivator activity with ATF5 independently of CDK4. The chain is G1/S-specific cyclin-D3 from Mus musculus (Mouse).